The following is a 427-amino-acid chain: Histidinol dehydrogenase (427 aa).

Positions 232, 254, and 257 each coordinate substrate. Residues glutamine 254 and histidine 257 each contribute to the Zn(2+) site. Catalysis depends on proton acceptor residues glutamate 322 and histidine 323. Substrate contacts are provided by histidine 323, aspartate 356, glutamate 410, and histidine 415. Aspartate 356 serves as a coordination point for Zn(2+). Histidine 415 provides a ligand contact to Zn(2+).

Belongs to the histidinol dehydrogenase family. Requires Zn(2+) as cofactor.

The catalysed reaction is L-histidinol + 2 NAD(+) + H2O = L-histidine + 2 NADH + 3 H(+). It participates in amino-acid biosynthesis; L-histidine biosynthesis; L-histidine from 5-phospho-alpha-D-ribose 1-diphosphate: step 9/9. Its function is as follows. Catalyzes the sequential NAD-dependent oxidations of L-histidinol to L-histidinaldehyde and then to L-histidine. This is Histidinol dehydrogenase from Listeria innocua serovar 6a (strain ATCC BAA-680 / CLIP 11262).